Consider the following 259-residue polypeptide: Phosphate import ATP-binding protein PstB (259 aa).

Residues 2-248 (GQRIDVNHEN…ITMFNNPQNE (247 aa)) enclose the ABC transporter domain. Residue 37-44 (GPSGCGKS) participates in ATP binding.

The protein belongs to the ABC transporter superfamily. Phosphate importer (TC 3.A.1.7) family. As to quaternary structure, the complex is composed of two ATP-binding proteins (PstB), two transmembrane proteins (PstC and PstA) and a solute-binding protein (PstS).

It localises to the cell membrane. It carries out the reaction phosphate(out) + ATP + H2O = ADP + 2 phosphate(in) + H(+). Functionally, part of the ABC transporter complex PstSACB involved in phosphate import. Responsible for energy coupling to the transport system. In Bifidobacterium longum (strain NCC 2705), this protein is Phosphate import ATP-binding protein PstB.